The sequence spans 65 residues: Large ribosomal subunit protein bL35 (65 aa).

This sequence belongs to the bacterial ribosomal protein bL35 family.

This chain is Large ribosomal subunit protein bL35, found in Stenotrophomonas maltophilia (strain R551-3).